Consider the following 162-residue polypeptide: Cyanate hydratase (162 aa).

Catalysis depends on residues R90, E93, and S116.

Belongs to the cyanase family.

The catalysed reaction is cyanate + hydrogencarbonate + 3 H(+) = NH4(+) + 2 CO2. In terms of biological role, catalyzes the reaction of cyanate with bicarbonate to produce ammonia and carbon dioxide. The polypeptide is Cyanate hydratase (Populus trichocarpa (Western balsam poplar)).